Here is a 303-residue protein sequence, read N- to C-terminus: Signal recognition particle receptor FtsY (303 aa).

GTP is bound by residues 108–115 (GVNGAGKT), 190–194 (DTAGR), and 254–257 (TKLD).

Belongs to the GTP-binding SRP family. FtsY subfamily. Part of the signal recognition particle protein translocation system, which is composed of SRP and FtsY. SRP is a ribonucleoprotein composed of Ffh and a 4.5S RNA molecule.

Its subcellular location is the cell inner membrane. It is found in the cytoplasm. The catalysed reaction is GTP + H2O = GDP + phosphate + H(+). Functionally, involved in targeting and insertion of nascent membrane proteins into the cytoplasmic membrane. Acts as a receptor for the complex formed by the signal recognition particle (SRP) and the ribosome-nascent chain (RNC). Interaction with SRP-RNC leads to the transfer of the RNC complex to the Sec translocase for insertion into the membrane, the hydrolysis of GTP by both Ffh and FtsY, and the dissociation of the SRP-FtsY complex into the individual components. The polypeptide is Signal recognition particle receptor FtsY (Rickettsia conorii (strain ATCC VR-613 / Malish 7)).